We begin with the raw amino-acid sequence, 769 residues long: Discoidin, CUB and LCCL domain-containing protein 2 (769 aa).

Residues 1–29 show a composition bias toward low complexity; sequence MASRAPLRAARSPQDPGGRAAPAATGRAP. Positions 1 to 39 are disordered; it reads MASRAPLRAARSPQDPGGRAAPAATGRAPLPSAGWCPLP. An N-terminal signal peptide occupies residues 1–63; the sequence is MASRAPLRAA…LLLLLPDAGA (63 aa). Topologically, residues 64–523 are extracellular; the sequence is QKGDGCGHTV…VTPSVTKDVA (460 aa). Intrachain disulfides connect Cys69/Cys96 and Cys123/Cys145. Positions 69–184 constitute a CUB domain; it reads CGHTVLGPES…RGFLASYSVI (116 aa). Residue Asn92 is glycosylated (N-linked (GlcNAc...) asparagine). A glycan (N-linked (GlcNAc...) asparagine) is linked at Asn152. The LCCL domain maps to 184–282; that stretch reads IDKQDLITCL…MVGYLSTSLF (99 aa). A disulfide bond links Cys212 and Cys234. A glycan (N-linked (GlcNAc...) asparagine) is linked at Asn269. A disulfide bond links Cys289 and Cys446. The F5/8 type C domain maps to 289–446; the sequence is CYGTLGMESG…IAMKVELLGC (158 aa). A disordered region spans residues 455–476; that stretch reads PKLTQPPPPRNSNNLKNTTVHP. Residues 465–474 are compositionally biased toward polar residues; sequence NSNNLKNTTV. Residues Asn471 and Asn511 are each glycosylated (N-linked (GlcNAc...) asparagine). The chain crosses the membrane as a helical span at residues 524-544; it reads LAAVLVPVLVMALTTLILILV. The Cytoplasmic portion of the chain corresponds to 545–769; the sequence is CAWHWRNRKK…EKFDAFKETL (225 aa). Residue Ser601 is modified to Phosphoserine. Residues 719–769 are disordered; the sequence is SCSSGQAQYDTPKGGKPAAAPEELVYQVPQSTQEASGAGRDEKFDAFKETL. Over residues 757–769 the composition is skewed to basic and acidic residues; sequence GRDEKFDAFKETL.

Its subcellular location is the membrane. In Rattus norvegicus (Rat), this protein is Discoidin, CUB and LCCL domain-containing protein 2 (Dcbld2).